Here is a 372-residue protein sequence, read N- to C-terminus: DNA replication and repair protein RecF (372 aa).

30–37 (GENGQGKT) is an ATP binding site.

The protein belongs to the RecF family.

The protein resides in the cytoplasm. Functionally, the RecF protein is involved in DNA metabolism; it is required for DNA replication and normal SOS inducibility. RecF binds preferentially to single-stranded, linear DNA. It also seems to bind ATP. The protein is DNA replication and repair protein RecF of Anaeromyxobacter sp. (strain K).